The chain runs to 209 residues: Small ribosomal subunit protein uS4 (209 aa).

The region spanning 98–166 is the S4 RNA-binding domain; the sequence is RRLDNVVYRL…IKQAIELNKG (69 aa).

This sequence belongs to the universal ribosomal protein uS4 family. As to quaternary structure, part of the 30S ribosomal subunit. Contacts protein S5. The interaction surface between S4 and S5 is involved in control of translational fidelity.

One of the primary rRNA binding proteins, it binds directly to 16S rRNA where it nucleates assembly of the body of the 30S subunit. In terms of biological role, with S5 and S12 plays an important role in translational accuracy. The polypeptide is Small ribosomal subunit protein uS4 (Fervidobacterium nodosum (strain ATCC 35602 / DSM 5306 / Rt17-B1)).